We begin with the raw amino-acid sequence, 126 residues long: Glycerol dehydrogenase small subunit (126 aa).

The next 4 membrane-spanning stretches (helical) occupy residues 13 to 33 (WLTLVLGVVIILVGLFFVIAG), 41 to 61 (GSVYYVICGIPLVAGGVFMLM), 67 to 87 (AFLYLGALAYTWVWSLWEVGF), and 92 to 112 (LLPRDFGPTLLGILVALTIPV).

It is found in the cell membrane. It catalyses the reaction glycerol + A = dihydroxyacetone + AH2. Functionally, catalyzes the oxidation of glycerol to glycerone. Also acts, more slowly, on a number of other polyols including D-sorbitol, D-arabinitol, D-mannitol, meso-erythritol, adonitol and propylene glycol. This is Glycerol dehydrogenase small subunit (sldB) from Gluconobacter oxydans (strain 621H) (Gluconobacter suboxydans).